Consider the following 101-residue polypeptide: Small ribosomal subunit protein uS14 (101 aa).

This sequence belongs to the universal ribosomal protein uS14 family. As to quaternary structure, part of the 30S ribosomal subunit. Contacts proteins S3 and S10.

Functionally, binds 16S rRNA, required for the assembly of 30S particles and may also be responsible for determining the conformation of the 16S rRNA at the A site. The polypeptide is Small ribosomal subunit protein uS14 (Paenarthrobacter aurescens (strain TC1)).